Consider the following 1010-residue polypeptide: Signal peptide, CUB and EGF-like domain-containing protein 2 (1010 aa).

A signal peptide spans 1 to 24 (MGAVWTVRLLCLFLLLLNTRQSAA). The 41-residue stretch at 28-68 (NTDQCAEGSDACHIDAICQNTPTSYKCTCKTGFKGDGKHCE) folds into the EGF-like 1; calcium-binding domain. Disulfide bonds link Cys-32–Cys-45, Cys-39–Cys-54, Cys-56–Cys-67, Cys-73–Cys-85, Cys-81–Cys-94, Cys-96–Cys-109, Cys-115–Cys-126, and Cys-122–Cys-135. The 42-residue stretch at 69-110 (DIDECDVEYNGGCVHECNNIPGNYRCTCLDGFHLAHDGHNCL) folds into the EGF-like 2; calcium-binding domain. The EGF-like 3; calcium-binding domain maps to 111–147 (DVDECVFNNGGCQHVCVNTMGSYECRCKQGFFLSDNQ). 2 consecutive EGF-like domains span residues 160 to 196 (CMNK…QRGC) and 200 to 235 (CNHG…GRTC). The N-linked (GlcNAc...) asparagine glycan is linked to Asn-249. Positions 269-304 (CAVNNGGCDSTCKDTSTGVRCSCPVGFTLQPDGKSC) constitute an EGF-like 6 domain. Residues 306-346 (DIDECELHNGGCDHYCRNTIGSFECSCRKGFKLLTDERSCQ) form the EGF-like 7; calcium-binding domain. 9 disulfides stabilise this stretch: Cys-310–Cys-321, Cys-317–Cys-330, Cys-332–Cys-345, Cys-351–Cys-361, Cys-357–Cys-370, Cys-372–Cys-384, Cys-390–Cys-401, Cys-397–Cys-410, and Cys-412–Cys-425. The EGF-like 8; calcium-binding domain maps to 347-385 (DIDECFFERTCDHTCVNSPGSFQCVCNKGYTLYGLAHCG). The EGF-like 9; calcium-binding domain maps to 386 to 426 (DINECSFNNGGCEHTCENTMGSFGCHCRAGYKLHWNKKDCI). N-linked (GlcNAc...) asparagine glycosylation is found at Asn-488, Asn-703, Asn-774, and Asn-803. The cysteines at positions 822 and 848 are disulfide-linked. Residues 822–934 (CGGELGEFTG…KGFQVPYVTY (113 aa)) form the CUB domain. The interaction with the cholesterol-anchor of SHH stretch occupies residues 860–869 (ILVVVPEIYL). The cysteines at positions 875 and 896 are disulfide-linked. Asn-982 carries an N-linked (GlcNAc...) asparagine glycan.

As to quaternary structure, interacts with SHH via the cholesterol anchor of the dually lipid-modified SHH (ShhNp). Interacts with PTCH1. Forms homooligomers and heterooligomers with SCUBE1 and SCUBE3. Interacts with VEGFR2. Post-translationally, N-glycosylated.

Its subcellular location is the secreted. It is found in the cell surface. In terms of biological role, lipid-binding protein required for SHH long-range signaling by binding to the dually lipid-modified SHH (ShhNp) and by promoting ShhNp mobilization, solubilization and release from the cell membrane. Acts by enhancing the proteolytic processing (shedding) of the lipid-modified N- and C- terminal of ShhNp at the cell surface. Synergizes with DISP1 to cause an increase in SHH secretion. Probable cell surface coreceptor for VEGFR2 involved in VEGFR2-mediated angiogenesis. The protein is Signal peptide, CUB and EGF-like domain-containing protein 2 (scube2) of Danio rerio (Zebrafish).